Here is a 306-residue protein sequence, read N- to C-terminus: Protein pxr1 (306 aa).

Residues 1 to 11 (MGLAAPRKRTK) show a composition bias toward basic residues. 2 disordered regions span residues 1 to 27 (MGLA…STSG) and 148 to 241 (AQKE…SDIP). A compositionally biased stretch (polar residues) spans 15–27 (DPNNTNWSRSTSG). A G-patch domain is found at 25–79 (TSGYGHKIMSSQGWTPGSFLGARNAAHADMFTAASASHIRVVVKDDTLGLGARSK). Positions 182–191 (NTLKALREEQ) are enriched in basic and acidic residues. The segment covering 219-228 (KKERKTKKRK) has biased composition (basic residues).

This sequence belongs to the PINX1 family.

The protein resides in the nucleus. It is found in the nucleolus. In terms of biological role, involved in rRNA-processing at A0, A1 and A2 sites and negatively regulates telomerase. In Aspergillus oryzae (strain ATCC 42149 / RIB 40) (Yellow koji mold), this protein is Protein pxr1 (pxr1).